The chain runs to 266 residues: UPF0294 protein YafD (266 aa).

Belongs to the UPF0294 family.

The protein resides in the cytoplasm. This is UPF0294 protein YafD from Salmonella newport (strain SL254).